Here is a 685-residue protein sequence, read N- to C-terminus: Keratin, type II cytoskeletal 2 epidermal (685 aa).

The segment at 1-20 (MSCQISCKSRRGGGGGGGGG) is disordered. Positions 1 to 196 (MSCQISCKSR…DPEIQNVKSQ (196 aa)) are head. Arginine 22 is modified (asymmetric dimethylarginine). 2 positions are modified to phosphoserine: serine 25 and serine 28. At arginine 52 the chain carries Omega-N-methylarginine. The residue at position 64 (serine 64) is a Phosphoserine. The coil 1A stretch occupies residues 197-232 (EREQIKTLNNKFASFIDTVRFLEQQNQVLHTKWELL). The IF rod domain maps to 197 to 511 (EREQIKTLNN…KLLEGEECRM (315 aa)). The interval 233–251 (QQLDVGTRTTNLDPVFQAY) is linker 1. A coil 1B region spans residues 252–343 (IGILKKQVDR…TLYDTELSQL (92 aa)). Residues 344-367 (QQNVTDTNVILSMDNNRNLDLDSI) form a linker 12 region. The interval 368–507 (IAEVQSQYEI…ATYRKLLEGE (140 aa)) is coil 2. The segment at 508 to 685 (ECRMSGDFSD…CGSGVTFSFR (178 aa)) is tail. The segment at 532–685 (VASKAGFGSG…CGSGVTFSFR (154 aa)) is disordered. The segment covering 538–678 (FGSGGQSSGG…GSGSGEGCGS (141 aa)) has biased composition (gly residues). Arginine 554, arginine 588, arginine 603, and arginine 653 each carry omega-N-methylarginine.

It belongs to the intermediate filament family. Heterotetramer of two type I and two type II keratins. Associates with KRT10.

It is found in the cytoplasm. In terms of biological role, probably contributes to terminal cornification. Associated with keratinocyte activation, proliferation and keratinization. Required for maintenance of corneocytes and keratin filaments in suprabasal keratinocytes in the epidermis of the ear, potentially via moderation of expression and localization of keratins and their partner proteins. Plays a role in the establishment of the epidermal barrier on plantar skin. In Rattus norvegicus (Rat), this protein is Keratin, type II cytoskeletal 2 epidermal.